The primary structure comprises 33 residues: ATSYEKITINKNSRSTLSSVRHIIRKNNYRKDL.

Belongs to the eukaryotic ribosomal protein eL28 family. Component of the large ribosomal subunit.

Its subcellular location is the cytoplasm. Its function is as follows. Component of the large ribosomal subunit. The ribosome is a large ribonucleoprotein complex responsible for the synthesis of proteins in the cell. This Xenopus laevis (African clawed frog) protein is Large ribosomal subunit protein eL28 (rpl28).